The primary structure comprises 176 residues: Inner membrane assembly complex subunit 17 (176 aa).

A mitochondrion-targeting transit peptide spans 1–28; the sequence is MLRVLPTSFKSISTRSAFRACQLSPLTV. The Mitochondrial matrix portion of the chain corresponds to 29–98; sequence YCPLKSSQGT…MSQEVSLKRF (70 aa). The helical transmembrane segment at 99–121 threads the bilayer; the sequence is VRPLWVFFLMSSTVYLILHYVWW. At 122 to 176 the chain is on the mitochondrial intermembrane side; sequence KLEVVEKEKELQSHVESLEMELDQTLKSQNQNVSSSQNNGNNKTNDKPWYRKWFF. A coiled-coil region spans residues 123–151; it reads LEVVEKEKELQSHVESLEMELDQTLKSQN. Over residues 149–163 the composition is skewed to low complexity; it reads SQNQNVSSSQNNGNN. Residues 149-168 are disordered; it reads SQNQNVSSSQNNGNNKTNDK.

This sequence belongs to the INA17 family. Component of the inner membrane assembly (INA) complex, composed of INA17 and INA22. Interacts with a subset of F(1)F(0)-ATP synthase subunits of the F(1)-domain and the peripheral stalk.

It is found in the mitochondrion inner membrane. In terms of biological role, component of the INA complex (INAC) that promotes the biogenesis of mitochondrial F(1)F(0)-ATP synthase. INAC facilitates the assembly of the peripheral stalk and promotes the assembly of the catalytic F(1)-domain with the membrane-embedded F(0)-domain. The polypeptide is Inner membrane assembly complex subunit 17 (Zygosaccharomyces rouxii (strain ATCC 2623 / CBS 732 / NBRC 1130 / NCYC 568 / NRRL Y-229)).